Here is a 423-residue protein sequence, read N- to C-terminus: Enolase (423 aa).

Gln165 lines the (2R)-2-phosphoglycerate pocket. Glu209 functions as the Proton donor in the catalytic mechanism. Mg(2+)-binding residues include Asp244, Glu285, and Asp310. (2R)-2-phosphoglycerate contacts are provided by Lys335, Arg364, Ser365, and Lys386. Residue Lys335 is the Proton acceptor of the active site.

It belongs to the enolase family. In terms of assembly, homooctamer formed by a tetramer of dimers. It depends on Mg(2+) as a cofactor.

The protein resides in the cytoplasm. The protein localises to the secreted. It is found in the cell surface. The catalysed reaction is (2R)-2-phosphoglycerate = phosphoenolpyruvate + H2O. It participates in carbohydrate degradation; glycolysis; pyruvate from D-glyceraldehyde 3-phosphate: step 4/5. The covalent binding to the substrate causes inactivation of the enzyme, and possibly serves as a signal for the export of the protein. Its function is as follows. Catalyzes the reversible conversion of 2-phosphoglycerate (2-PG) into phosphoenolpyruvate (PEP). It is essential for the degradation of carbohydrates via glycolysis. This is Enolase from Methanocaldococcus jannaschii (strain ATCC 43067 / DSM 2661 / JAL-1 / JCM 10045 / NBRC 100440) (Methanococcus jannaschii).